Here is a 235-residue protein sequence, read N- to C-terminus: Serine protease SplA (235 aa).

Positions 1–35 (MNKNVMVKGLTALTILTSLGFAENISNQPHSIAKA) are cleaved as a signal peptide. Catalysis depends on charge relay system residues His-74, Asp-113, and Ser-189.

It belongs to the peptidase S1B family.

Its subcellular location is the secreted. The chain is Serine protease SplA (splA) from Staphylococcus aureus (strain USA300).